The following is a 360-amino-acid chain: Phenylalanine--tRNA ligase alpha subunit (360 aa).

Glu255 contributes to the Mg(2+) binding site.

It belongs to the class-II aminoacyl-tRNA synthetase family. Phe-tRNA synthetase alpha subunit type 1 subfamily. As to quaternary structure, tetramer of two alpha and two beta subunits. Mg(2+) is required as a cofactor.

It localises to the cytoplasm. The enzyme catalyses tRNA(Phe) + L-phenylalanine + ATP = L-phenylalanyl-tRNA(Phe) + AMP + diphosphate + H(+). This is Phenylalanine--tRNA ligase alpha subunit from Rhizorhabdus wittichii (strain DSM 6014 / CCUG 31198 / JCM 15750 / NBRC 105917 / EY 4224 / RW1) (Sphingomonas wittichii).